Consider the following 202-residue polypeptide: Small ribosomal subunit protein uS4 (202 aa).

One can recognise an S4 RNA-binding domain in the interval Ser91–Ile154.

Belongs to the universal ribosomal protein uS4 family. Part of the 30S ribosomal subunit. Contacts protein S5. The interaction surface between S4 and S5 is involved in control of translational fidelity.

Its function is as follows. One of the primary rRNA binding proteins, it binds directly to 16S rRNA where it nucleates assembly of the body of the 30S subunit. With S5 and S12 plays an important role in translational accuracy. This is Small ribosomal subunit protein uS4 from Ehrlichia ruminantium (strain Gardel).